Here is a 634-residue protein sequence, read N- to C-terminus: uncharacterized protein (634 aa).

The first 40 residues, 1-40, serve as a signal peptide directing secretion; sequence MWLQQRLKGLPGLLSSSWARRLLCLLGLLLLLLWFGGSGA. The Extracellular segment spans residues 41–589; it reads RRAAGGLHLL…DEHMAQQDPG (549 aa). Asparagine 363 carries an N-linked (GlcNAc...) asparagine glycan. A helical transmembrane segment spans residues 590–610; it reads LPFLFWFSVASLITLFHLFLF. Residues 611–634 are Cytoplasmic-facing; that stretch reads KLIYNEYCGPGAKPLFRSKEDPSV.

The protein localises to the membrane. This is an uncharacterized protein from Homo sapiens (Human).